A 612-amino-acid chain; its full sequence is Dihydroxy-acid dehydratase (612 aa).

Aspartate 81 contributes to the Mg(2+) binding site. Residue cysteine 122 participates in [2Fe-2S] cluster binding. Residues aspartate 123 and lysine 124 each contribute to the Mg(2+) site. Lysine 124 carries the post-translational modification N6-carboxylysine. [2Fe-2S] cluster is bound at residue cysteine 195. A Mg(2+)-binding site is contributed by glutamate 491. The active-site Proton acceptor is the serine 517.

Belongs to the IlvD/Edd family. In terms of assembly, homodimer. It depends on [2Fe-2S] cluster as a cofactor. Mg(2+) is required as a cofactor.

The catalysed reaction is (2R)-2,3-dihydroxy-3-methylbutanoate = 3-methyl-2-oxobutanoate + H2O. It carries out the reaction (2R,3R)-2,3-dihydroxy-3-methylpentanoate = (S)-3-methyl-2-oxopentanoate + H2O. Its pathway is amino-acid biosynthesis; L-isoleucine biosynthesis; L-isoleucine from 2-oxobutanoate: step 3/4. It participates in amino-acid biosynthesis; L-valine biosynthesis; L-valine from pyruvate: step 3/4. Its function is as follows. Functions in the biosynthesis of branched-chain amino acids. Catalyzes the dehydration of (2R,3R)-2,3-dihydroxy-3-methylpentanoate (2,3-dihydroxy-3-methylvalerate) into 2-oxo-3-methylpentanoate (2-oxo-3-methylvalerate) and of (2R)-2,3-dihydroxy-3-methylbutanoate (2,3-dihydroxyisovalerate) into 2-oxo-3-methylbutanoate (2-oxoisovalerate), the penultimate precursor to L-isoleucine and L-valine, respectively. In Haemophilus influenzae (strain PittGG), this protein is Dihydroxy-acid dehydratase.